We begin with the raw amino-acid sequence, 309 residues long: MASTFKITFLGTGGSVPKPGRGLPAIAVQVDNIVNLFDCGEGTQKQFMKSGVSFMNVKNIFISHFHGDHFFGLPGLLSTFSFNGRIDDLNIFGPPGTIDEIKKVLSLIDFKITYNIKIAEMEENKKYDFDLFDVYAIKNDHTKYGYSYKLKEKDLIKINREKADSIGFPKNKLELLRNNGEYYYMGKRYSIWDVADGIKPGRSIVYSGDTRPFNDMLKFASNCDVLIHDSTMDASIENLANEYGHSTARQAAEIALKANVKRLFLFHYSSRYNDLNLLLNEAKSIFNDSYLSREMLEFNVDKKTELIKI.

Zn(2+) contacts are provided by His64, His66, Asp68, His69, His141, Asp209, and His267. The active-site Proton acceptor is the Asp68.

Belongs to the RNase Z family. As to quaternary structure, homodimer. Zn(2+) is required as a cofactor.

It catalyses the reaction Endonucleolytic cleavage of RNA, removing extra 3' nucleotides from tRNA precursor, generating 3' termini of tRNAs. A 3'-hydroxy group is left at the tRNA terminus and a 5'-phosphoryl group is left at the trailer molecule.. Zinc phosphodiesterase, which displays some tRNA 3'-processing endonuclease activity. Probably involved in tRNA maturation, by removing a 3'-trailer from precursor tRNA. The sequence is that of Ribonuclease Z from Picrophilus torridus (strain ATCC 700027 / DSM 9790 / JCM 10055 / NBRC 100828 / KAW 2/3).